Reading from the N-terminus, the 133-residue chain is Fluoride-specific ion channel FluC (133 aa).

Transmembrane regions (helical) follow at residues 3–23 (AVVW…GSGL), 41–61 (WGTL…LIWV), 76–96 (IVGL…CLVF), and 103–123 (LIVG…VFLG). 2 residues coordinate Na(+): Gly-81 and Thr-84.

This sequence belongs to the fluoride channel Fluc/FEX (TC 1.A.43) family.

The protein resides in the cell inner membrane. The enzyme catalyses fluoride(in) = fluoride(out). Its activity is regulated as follows. Na(+) is not transported, but it plays an essential structural role and its presence is essential for fluoride channel function. Its function is as follows. Fluoride-specific ion channel. Important for reducing fluoride concentration in the cell, thus reducing its toxicity. In Xylella fastidiosa (strain M23), this protein is Fluoride-specific ion channel FluC.